The primary structure comprises 63 residues: Large ribosomal subunit protein uL29 (63 aa).

It belongs to the universal ribosomal protein uL29 family.

The protein is Large ribosomal subunit protein uL29 of Haemophilus influenzae (strain 86-028NP).